We begin with the raw amino-acid sequence, 1313 residues long: Ataxin-2 (1313 aa).

A compositionally biased stretch (low complexity) spans 1–12 (MRSAAAAPRSPA). A disordered region spans residues 1–255 (MRSAAAAPRS…RNSNKGLPQS (255 aa)). Residues 48–65 (GPYPSAAPPPPGPGPPPS) show a composition bias toward pro residues. 4 stretches are compositionally biased toward low complexity: residues 104-114 (FVVLLLPLASP), 141-154 (ARPAPGCPRPACEP), 166-187 (QQQQQQQQQQQQQQQQQQQQQQ), and 204-234 (LLASPAAAPSPSSSSVSSSSATAPSSVVAAT). The span at 235 to 244 (SGGGRPGLGR) shows a compositional bias: gly residues. Serine 248 is subject to Phosphoserine. The Sm domain occupies 267–344 (RMVHILTSVV…FVVVQFKDMD (78 aa)). Residues serine 393, serine 466, serine 478, serine 508, and serine 554 each carry the phosphoserine modification. 2 stretches are compositionally biased toward basic and acidic residues: residues 459 to 471 (ALENDDRSEEEKY) and 478 to 492 (SSEREGHSINTRENK). Disordered regions lie at residues 459 to 954 (ALEN…HQQP) and 1137 to 1219 (NATL…NSFP). The segment covering 508–544 (SGRQNSPRMGQPGSGSMPSRSTSHTSDFNPNSGSDQR) has biased composition (polar residues). The span at 552 to 562 (WPSPCPSPSSR) shows a compositional bias: pro residues. The span at 563–581 (PPSRYQSGPNSLPPRAATP) shows a compositional bias: low complexity. The span at 582-598 (TRPPSRPPSRPSRPPSH) shows a compositional bias: pro residues. Serine 624 is subject to Phosphoserine. Over residues 627 to 637 (AQRHPRNHRVS) the composition is skewed to basic residues. Arginine 640 bears the Asymmetric dimethylarginine; alternate mark. Arginine 640 is subject to Omega-N-methylarginine; alternate. Serine 642 carries the phosphoserine modification. Positions 666-681 (TSPSGGTWSSVVSGVP) are enriched in low complexity. Serine 684 carries the post-translational modification Phosphoserine. The span at 693–703 (PRQNSIGNTPS) shows a compositional bias: polar residues. Serine 728 is modified (phosphoserine). Residue threonine 741 is modified to Phosphothreonine. A compositionally biased stretch (polar residues) spans 768-777 (PNETSPSFSK). 2 positions are modified to phosphoserine: serine 772 and serine 784. Residues 788-804 (SEHRKQIDDLKKFKNDF) are compositionally biased toward basic and acidic residues. Polar residues predominate over residues 807–820 (QPSSTSESMDQLLN). Residues 821-844 (KNREGEKSRDLIKDKIEPSAKDSF) are compositionally biased toward basic and acidic residues. The segment covering 847–871 (NSSSNCTSGSSKPNSPSISPSILSN) has biased composition (low complexity). A phosphoserine mark is found at serine 856, serine 857, serine 861, serine 865, serine 867, serine 888, and serine 889. A compositionally biased stretch (polar residues) spans 880-891 (VTSQGVQTSSPA). Residue lysine 893 forms a Glycyl lysine isopeptide (Lys-Gly) (interchain with G-Cter in SUMO2) linkage. The segment covering 893 to 910 (KQEKDDKEEKKDAAEQVR) has biased composition (basic and acidic residues). 2 stretches are compositionally biased toward low complexity: residues 925-936 (SFSQPKPSTTPT) and 1155-1192 (GQQQSQHGGSHPAPSPVQHHQHQAAQALHLASPQQQSA). The span at 1206-1219 (TPASNTQSPQNSFP) shows a compositional bias: polar residues.

Belongs to the ataxin-2 family. In terms of assembly, monomer. Can also form homodimers. Interacts with TARDBP; the interaction is RNA-dependent. Interacts with RBFOX1. Interacts with polyribosomes. Interacts with SH3GL2 and SH3GL3. Interacts with SH3KBP1 and CBL. Interacts with EGFR. Interacts with ATXN2L. In terms of tissue distribution, expressed in the brain, heart, liver, skeletal muscle, pancreas and placenta. Isoform 1 is predominant in the brain and spinal cord. Isoform 4 is more abundant in the cerebellum. In the brain, broadly expressed in the amygdala, caudate nucleus, corpus callosum, hippocampus, hypothalamus, substantia nigra, subthalamic nucleus and thalamus.

It localises to the cytoplasm. Its function is as follows. Involved in EGFR trafficking, acting as negative regulator of endocytic EGFR internalization at the plasma membrane. In Homo sapiens (Human), this protein is Ataxin-2 (ATXN2).